The following is a 110-amino-acid chain: uncharacterized protein (110 aa).

Disordered regions lie at residues 1–42 (MEWG…RAQQ) and 66–110 (RQLG…AAEP). Positions 36 to 68 (REERAQQLLDAVEQRQRQLLDTIAACEEMLRQL) form a coiled coil.

This is an uncharacterized protein from Homo sapiens (Human).